Consider the following 1357-residue polypeptide: DNA-directed RNA polymerase subunit beta (1357 aa).

It belongs to the RNA polymerase beta chain family. As to quaternary structure, the RNAP catalytic core consists of 2 alpha, 1 beta, 1 beta' and 1 omega subunit. When a sigma factor is associated with the core the holoenzyme is formed, which can initiate transcription.

It carries out the reaction RNA(n) + a ribonucleoside 5'-triphosphate = RNA(n+1) + diphosphate. Functionally, DNA-dependent RNA polymerase catalyzes the transcription of DNA into RNA using the four ribonucleoside triphosphates as substrates. The protein is DNA-directed RNA polymerase subunit beta of Pseudomonas syringae pv. syringae (strain B728a).